Here is a 134-residue protein sequence, read N- to C-terminus: Large ribosomal subunit protein bL17 (134 aa).

This sequence belongs to the bacterial ribosomal protein bL17 family. In terms of assembly, part of the 50S ribosomal subunit. Contacts protein L32.

The chain is Large ribosomal subunit protein bL17 from Thioalkalivibrio sulfidiphilus (strain HL-EbGR7).